The sequence spans 453 residues: Phosphoglucosamine mutase (453 aa).

S110 serves as the catalytic Phosphoserine intermediate. Residues S110, D248, D250, and D252 each contribute to the Mg(2+) site. S110 is modified (phosphoserine).

This sequence belongs to the phosphohexose mutase family. Mg(2+) serves as cofactor. In terms of processing, activated by phosphorylation.

The catalysed reaction is alpha-D-glucosamine 1-phosphate = D-glucosamine 6-phosphate. Its function is as follows. Catalyzes the conversion of glucosamine-6-phosphate to glucosamine-1-phosphate. This chain is Phosphoglucosamine mutase, found in Mycolicibacterium smegmatis (strain ATCC 700084 / mc(2)155) (Mycobacterium smegmatis).